Consider the following 71-residue polypeptide: Exodeoxyribonuclease 7 small subunit (71 aa).

The protein belongs to the XseB family. Heterooligomer composed of large and small subunits.

It localises to the cytoplasm. The enzyme catalyses Exonucleolytic cleavage in either 5'- to 3'- or 3'- to 5'-direction to yield nucleoside 5'-phosphates.. In terms of biological role, bidirectionally degrades single-stranded DNA into large acid-insoluble oligonucleotides, which are then degraded further into small acid-soluble oligonucleotides. The polypeptide is Exodeoxyribonuclease 7 small subunit (Streptococcus agalactiae serotype Ia (strain ATCC 27591 / A909 / CDC SS700)).